We begin with the raw amino-acid sequence, 621 residues long: GPI-anchor transamidase component GPAA1 (621 aa).

The Cytoplasmic portion of the chain corresponds to 1 to 19 (MGLLSDPVRRRALARIVLR). The chain crosses the membrane as a helical span at residues 20–41 (LNTPLCVLSYVAGIAWFLALAF). The Lumenal segment spans residues 42–370 (PPLTQRTYMS…LLPALSRFVS (329 aa)). Positions 49 and 51 each coordinate a 2-acyl-6-[6-phosphoethanolamine-alpha-D-mannosyl-(1-&gt;2)-6-phosphoethanolamine-alpha-D-mannosyl-(1-&gt;6)-2-phosphoethanolamine-alpha-D-mannosyl-(1-&gt;4)-alpha-D-glucosaminyl]-1-(1-radyl,2-acyl-sn-glycero-3-phospho)-1D-myo-inositol. N-linked (GlcNAc...) asparagine glycosylation is present at Asn-203. A disulfide bridge links Cys-259 with Cys-266. The a 2-acyl-6-[6-phosphoethanolamine-alpha-D-mannosyl-(1-&gt;2)-6-phosphoethanolamine-alpha-D-mannosyl-(1-&gt;6)-2-phosphoethanolamine-alpha-D-mannosyl-(1-&gt;4)-alpha-D-glucosaminyl]-1-(1-radyl,2-acyl-sn-glycero-3-phospho)-1D-myo-inositol site is built by His-354, Gln-355, and Ser-356. Gln-355 serves as a coordination point for Mg(2+). Residues 371 to 393 (IGLYMPATGFLLLVLGLKALELW) traverse the membrane as a helical segment. The Cytoplasmic segment spans residues 394 to 425 (MQLHQAGVNPEEAGKAPSPGTPLLPTQGVGLA). The chain crosses the membrane as a helical span at residues 426 to 450 (SLTAPLLISQAMGLALYFLPVLGQH). Over 451–462 (LATQHFPVAEAE) the chain is Lumenal. The helical transmembrane segment at 463–483 (AVVLTLLAIYVAGLALPHNTH) threads the bilayer. At 484–495 (RVVNSQVPDRGW) the chain is on the cytoplasmic side. A run of 2 helical transmembrane segments spans residues 496-519 (MALK…LNFS) and 520-536 (LGFL…ALAK). Over 537 to 540 (PHGP) the chain is Cytoplasmic. Residues 541-563 (RTLYAALLVVTSPAVTLFGSLFL) form a helical membrane-spanning segment. At 564 to 597 (WRELLEVPLSLAEGWQLFLTALAQGVLEHYTYGA) the chain is on the lumenal side. Residues 598 to 619 (LLFPILALGLYPCWLLFWNVLF) traverse the membrane as a helical segment. Residues 620 to 621 (WK) are Cytoplasmic-facing.

In terms of assembly, heteropentamer. Part of the GPI-anchor transamidase complex, consisting of PIGK, PIGT, PIGS, PIGU and GAA1. Interacts with PIGK. As to expression, ubiquitously expressed in fetal and adult tissues. Expressed at higher levels in fetal tissues than adult tissues. In embryos abundant in the choroid plexus, skeletal muscle,.

The protein localises to the endoplasmic reticulum membrane. The protein operates within glycolipid biosynthesis; glycosylphosphatidylinositol-anchor biosynthesis. In terms of biological role, component of the glycosylphosphatidylinositol-anchor (GPI-anchor) transamidase (GPI-T) complex that catalyzes the formation of the linkage between a proprotein and a GPI-anchor and participates in GPI anchored protein biosynthesis. Binds GPI-anchor. This Mus musculus (Mouse) protein is GPI-anchor transamidase component GPAA1.